Reading from the N-terminus, the 573-residue chain is Phosphoenolpyruvate-protein phosphotransferase (573 aa).

The Tele-phosphohistidine intermediate role is filled by histidine 190. Phosphoenolpyruvate contacts are provided by arginine 297 and arginine 334. Mg(2+) contacts are provided by glutamate 433 and aspartate 457. Phosphoenolpyruvate-binding positions include 456-457 and arginine 467; that span reads ND. The Proton donor role is filled by cysteine 504.

The protein belongs to the PEP-utilizing enzyme family. As to quaternary structure, homodimer. The cofactor is Mg(2+).

The protein resides in the cytoplasm. The enzyme catalyses L-histidyl-[protein] + phosphoenolpyruvate = N(pros)-phospho-L-histidyl-[protein] + pyruvate. Functionally, general (non sugar-specific) component of the phosphoenolpyruvate-dependent sugar phosphotransferase system (sugar PTS). This major carbohydrate active-transport system catalyzes the phosphorylation of incoming sugar substrates concomitantly with their translocation across the cell membrane. Enzyme I transfers the phosphoryl group from phosphoenolpyruvate (PEP) to the phosphoryl carrier protein (HPr). This Borreliella burgdorferi (strain ATCC 35210 / DSM 4680 / CIP 102532 / B31) (Borrelia burgdorferi) protein is Phosphoenolpyruvate-protein phosphotransferase (ptsI).